Reading from the N-terminus, the 87-residue chain is Small ribosomal subunit protein uS17 (87 aa).

The protein belongs to the universal ribosomal protein uS17 family. In terms of assembly, part of the 30S ribosomal subunit.

Its function is as follows. One of the primary rRNA binding proteins, it binds specifically to the 5'-end of 16S ribosomal RNA. This Bacillus velezensis (strain DSM 23117 / BGSC 10A6 / LMG 26770 / FZB42) (Bacillus amyloliquefaciens subsp. plantarum) protein is Small ribosomal subunit protein uS17.